Here is a 172-residue protein sequence, read N- to C-terminus: C-phycocyanin beta subunit (172 aa).

The residue at position 72 (Asn-72) is an N4-methylasparagine. (2R,3E)-phycocyanobilin is bound by residues Cys-82 and Cys-153.

This sequence belongs to the phycobiliprotein family. As to quaternary structure, the alpha and beta subunits exhibit high affinity for one another and form heterodimers. These heterodimers form heterohexamers of 3 alpha and 3 beta subunits which, in turn, aggregate into a heterododecamer consisting of 2 heterohexamers. In terms of processing, contains two covalently linked bilin chromophores.

Its subcellular location is the cellular thylakoid membrane. In terms of biological role, light-harvesting photosynthetic bile pigment-protein from the phycobiliprotein complex (phycobilisome, PBS). Phycocyanin is the major phycobiliprotein in the PBS rod. In Arthrospira platensis (Spirulina platensis), this protein is C-phycocyanin beta subunit (cpcB).